The sequence spans 175 residues: Ribulose bisphosphate carboxylase small subunit, chloroplastic 2 (175 aa).

A chloroplast-targeting transit peptide spans 1-46 (MAPTVMASSATSVAPFQGLKSTAGLPVSRRSTNSGFGNVSNGGRIK).

The protein belongs to the RuBisCO small chain family. Heterohexadecamer of 8 large and 8 small subunits.

It localises to the plastid. It is found in the chloroplast. RuBisCO catalyzes two reactions: the carboxylation of D-ribulose 1,5-bisphosphate, the primary event in carbon dioxide fixation, as well as the oxidative fragmentation of the pentose substrate. Both reactions occur simultaneously and in competition at the same active site. Although the small subunit is not catalytic it is essential for maximal activity. In Oryza sativa subsp. japonica (Rice), this protein is Ribulose bisphosphate carboxylase small subunit, chloroplastic 2.